A 61-amino-acid polypeptide reads, in one-letter code: MNNMKSADNYQQLDNNALEQVVGGKYYGNGVHCTKSGCSVNWGEAFSAGVHRLANGGNGFW.

Positions 1 to 24 (MNNMKSADNYQQLDNNALEQVVGG) are excised as a propeptide. Residues C33 and C38 are joined by a disulfide bond.

The protein belongs to the bacteriocin class IIA/YGNGV family.

The protein resides in the secreted. Active against L.monocytogenes and several lactic acid bacteria. In Leuconostoc carnosum, this protein is Bacteriocin leucocin-B.